Reading from the N-terminus, the 138-residue chain is Cellular retinoic acid-binding protein 2 (138 aa).

Residues 21 to 31 carry the Nuclear localization signal motif; that stretch reads KVLGVNVMLRK. K102 is covalently cross-linked (Glycyl lysine isopeptide (Lys-Gly) (interchain with G-Cter in SUMO)). 133 to 135 serves as a coordination point for all-trans-retinoate; that stretch reads RVY.

It belongs to the calycin superfamily. Fatty-acid binding protein (FABP) family. Interacts with importin alpha, RXR and RARA. Post-translationally, sumoylated in response to retinoic acid binding, sumoylation is critical for dissociation from ER and subsequent nuclear translocation.

It is found in the cytoplasm. The protein localises to the endoplasmic reticulum. Its subcellular location is the nucleus. Functionally, transports retinoic acid to the nucleus. Regulates the access of retinoic acid to the nuclear retinoic acid receptors. This is Cellular retinoic acid-binding protein 2 (CRABP2) from Bos taurus (Bovine).